Reading from the N-terminus, the 216-residue chain is Peptide methionine sulfoxide reductase MsrA (216 aa).

Cys54 is an active-site residue.

This sequence belongs to the MsrA Met sulfoxide reductase family.

The catalysed reaction is L-methionyl-[protein] + [thioredoxin]-disulfide + H2O = L-methionyl-(S)-S-oxide-[protein] + [thioredoxin]-dithiol. The enzyme catalyses [thioredoxin]-disulfide + L-methionine + H2O = L-methionine (S)-S-oxide + [thioredoxin]-dithiol. In terms of biological role, has an important function as a repair enzyme for proteins that have been inactivated by oxidation. Catalyzes the reversible oxidation-reduction of methionine sulfoxide in proteins to methionine. The chain is Peptide methionine sulfoxide reductase MsrA from Xanthomonas oryzae pv. oryzae (strain PXO99A).